Reading from the N-terminus, the 102-residue chain is Small ribosomal subunit protein uS10 (102 aa).

This sequence belongs to the universal ribosomal protein uS10 family. Part of the 30S ribosomal subunit.

In terms of biological role, involved in the binding of tRNA to the ribosomes. The polypeptide is Small ribosomal subunit protein uS10 (Bacillus cereus (strain ATCC 10987 / NRS 248)).